The following is a 384-amino-acid chain: MNWNKRINHKLNMHIFNKKFRVKVAVQKNNNRIINVNGMQYINFSSNDYLGLRNNARIVQAWKTAATRYGIGSTGSSLITGYSTIHQSLEEKLAKWLDYPKAILFISGYTANTAIISTLIQKNDRIFMDKLSHSSILEPSYNSSGKCYRFIHNNPSSLMNKFYSSSGKNPLIITEGIFSMDGDIAPLSIISSFSKKIKGLLMVDDAHGIGVSGYNGKGSCEQHRVKPDILTITFGKAFGISGAAVLCSNNIAEYLWQFSKHLMFSTAMPIAQAYAIRQALYCIQHADKLRRKLQENINFFLKNSQCLSHLLKCSHTAIQPIIIGDNEETMILSDQLKSKGIWVNAIRPPTVPNKSSRLRITLNALHTKEDIEQLIESIYKLYDR.

Residue R21 participates in substrate binding. 108-109 (GY) serves as a coordination point for pyridoxal 5'-phosphate. Position 133 (H133) interacts with substrate. Pyridoxal 5'-phosphate-binding residues include S179, H207, and T233. The residue at position 236 (K236) is an N6-(pyridoxal phosphate)lysine. T350 serves as a coordination point for substrate.

The protein belongs to the class-II pyridoxal-phosphate-dependent aminotransferase family. BioF subfamily. As to quaternary structure, homodimer. Pyridoxal 5'-phosphate is required as a cofactor.

It carries out the reaction 6-carboxyhexanoyl-[ACP] + L-alanine + H(+) = (8S)-8-amino-7-oxononanoate + holo-[ACP] + CO2. Its pathway is cofactor biosynthesis; biotin biosynthesis. Catalyzes the decarboxylative condensation of pimeloyl-[acyl-carrier protein] and L-alanine to produce 8-amino-7-oxononanoate (AON), [acyl-carrier protein], and carbon dioxide. This chain is 8-amino-7-oxononanoate synthase, found in Buchnera aphidicola subsp. Baizongia pistaciae (strain Bp).